A 412-amino-acid polypeptide reads, in one-letter code: Multifunctional CCA protein (412 aa).

2 residues coordinate ATP: Gly8 and Arg11. Residues Gly8 and Arg11 each coordinate CTP. Mg(2+) contacts are provided by Asp21 and Asp23. Positions 91, 137, and 140 each coordinate ATP. CTP contacts are provided by Arg91, Arg137, and Arg140. The HD domain maps to 228–329 (TGIHTLMTLS…VKLFDSIDAW (102 aa)).

The protein belongs to the tRNA nucleotidyltransferase/poly(A) polymerase family. Bacterial CCA-adding enzyme type 1 subfamily. As to quaternary structure, monomer. Can also form homodimers and oligomers. Mg(2+) is required as a cofactor. The cofactor is Ni(2+).

It carries out the reaction a tRNA precursor + 2 CTP + ATP = a tRNA with a 3' CCA end + 3 diphosphate. The enzyme catalyses a tRNA with a 3' CCA end + 2 CTP + ATP = a tRNA with a 3' CCACCA end + 3 diphosphate. In terms of biological role, catalyzes the addition and repair of the essential 3'-terminal CCA sequence in tRNAs without using a nucleic acid template. Adds these three nucleotides in the order of C, C, and A to the tRNA nucleotide-73, using CTP and ATP as substrates and producing inorganic pyrophosphate. tRNA 3'-terminal CCA addition is required both for tRNA processing and repair. Also involved in tRNA surveillance by mediating tandem CCA addition to generate a CCACCA at the 3' terminus of unstable tRNAs. While stable tRNAs receive only 3'-terminal CCA, unstable tRNAs are marked with CCACCA and rapidly degraded. This is Multifunctional CCA protein from Escherichia coli O6:K15:H31 (strain 536 / UPEC).